Consider the following 106-residue polypeptide: Glycoprotein GP16 (106 aa).

Glycosylated.

The protein localises to the host cytoplasm. Its function is as follows. May be involved in formation or transport of the nucleocapsid-containing vesicles around the nuclear membrane. This is Glycoprotein GP16 (GP16) from Autographa californica nuclear polyhedrosis virus (AcMNPV).